Here is a 677-residue protein sequence, read N- to C-terminus: Methionine--tRNA ligase (677 aa).

The 'HIGH' region motif lies at 15–25 (PYANGSIHLGH). Cysteine 146, cysteine 149, cysteine 159, and cysteine 162 together coordinate Zn(2+). The 'KMSKS' region motif lies at 333–337 (KMSKS). Position 336 (lysine 336) interacts with ATP. Positions 575 to 677 (DFAKVDLRVA…AGAKPGHQVK (103 aa)) constitute a tRNA-binding domain.

The protein belongs to the class-I aminoacyl-tRNA synthetase family. MetG type 1 subfamily. Homodimer. It depends on Zn(2+) as a cofactor.

The protein resides in the cytoplasm. It carries out the reaction tRNA(Met) + L-methionine + ATP = L-methionyl-tRNA(Met) + AMP + diphosphate. Is required not only for elongation of protein synthesis but also for the initiation of all mRNA translation through initiator tRNA(fMet) aminoacylation. The chain is Methionine--tRNA ligase from Shigella dysenteriae serotype 1 (strain Sd197).